Reading from the N-terminus, the 429-residue chain is Enolase (429 aa).

Residue Gln162 participates in (2R)-2-phosphoglycerate binding. Residue Glu204 is the Proton donor of the active site. Mg(2+)-binding residues include Asp241, Glu286, and Asp313. (2R)-2-phosphoglycerate contacts are provided by Lys338, Arg367, Ser368, and Lys389. Lys338 acts as the Proton acceptor in catalysis.

Belongs to the enolase family. The cofactor is Mg(2+).

It localises to the cytoplasm. The protein resides in the secreted. It is found in the cell surface. It carries out the reaction (2R)-2-phosphoglycerate = phosphoenolpyruvate + H2O. Its pathway is carbohydrate degradation; glycolysis; pyruvate from D-glyceraldehyde 3-phosphate: step 4/5. Its function is as follows. Catalyzes the reversible conversion of 2-phosphoglycerate (2-PG) into phosphoenolpyruvate (PEP). It is essential for the degradation of carbohydrates via glycolysis. The sequence is that of Enolase from Shouchella clausii (strain KSM-K16) (Alkalihalobacillus clausii).